Reading from the N-terminus, the 182-residue chain is UPF0397 protein SPH_0594 (182 aa).

A run of 5 helical transmembrane segments spans residues 10-30 (VVAV…NIPT), 46-66 (LLSI…GHAI), 73-93 (YGLW…VGLF), 109-129 (ILIF…VLAP), and 148-168 (IVAG…LLLA).

The protein belongs to the UPF0397 family.

Its subcellular location is the cell membrane. This chain is UPF0397 protein SPH_0594, found in Streptococcus pneumoniae (strain Hungary19A-6).